Reading from the N-terminus, the 156-residue chain is Aspartate 1-decarboxylase (156 aa).

The Schiff-base intermediate with substrate; via pyruvic acid role is filled by Ser29. A Pyruvic acid (Ser) modification is found at Ser29. Thr61 serves as a coordination point for substrate. Catalysis depends on Tyr62, which acts as the Proton donor. A substrate-binding site is contributed by 77–79; the sequence is GAA.

Belongs to the PanD family. As to quaternary structure, heterooctamer of four alpha and four beta subunits. It depends on pyruvate as a cofactor. Post-translationally, is synthesized initially as an inactive proenzyme, which is activated by self-cleavage at a specific serine bond to produce a beta-subunit with a hydroxyl group at its C-terminus and an alpha-subunit with a pyruvoyl group at its N-terminus.

The protein localises to the cytoplasm. It catalyses the reaction L-aspartate + H(+) = beta-alanine + CO2. The protein operates within cofactor biosynthesis; (R)-pantothenate biosynthesis; beta-alanine from L-aspartate: step 1/1. Functionally, catalyzes the pyruvoyl-dependent decarboxylation of aspartate to produce beta-alanine. The sequence is that of Aspartate 1-decarboxylase from Rhodopirellula baltica (strain DSM 10527 / NCIMB 13988 / SH1).